Consider the following 150-residue polypeptide: UPF0178 protein BceJ2315_16760 (150 aa).

Belongs to the UPF0178 family.

The chain is UPF0178 protein BceJ2315_16760 from Burkholderia cenocepacia (strain ATCC BAA-245 / DSM 16553 / LMG 16656 / NCTC 13227 / J2315 / CF5610) (Burkholderia cepacia (strain J2315)).